The following is a 173-amino-acid chain: Photosystem I assembly protein Ycf3 (173 aa).

TPR repeat units lie at residues 35–68 (AFVY…EEDP), 72–105 (SYIL…NPRM), and 120–153 (GEKA…APNN).

Belongs to the Ycf3 family.

It is found in the cellular thylakoid membrane. Functionally, essential for the assembly of the photosystem I (PSI) complex. May act as a chaperone-like factor to guide the assembly of the PSI subunits. This chain is Photosystem I assembly protein Ycf3, found in Rippkaea orientalis (strain PCC 8801 / RF-1) (Cyanothece sp. (strain PCC 8801)).